The primary structure comprises 270 residues: ATP synthase subunit delta (270 aa).

This sequence belongs to the ATPase delta chain family. F-type ATPases have 2 components, F(1) - the catalytic core - and F(0) - the membrane proton channel. F(1) has five subunits: alpha(3), beta(3), gamma(1), delta(1), epsilon(1). F(0) has three main subunits: a(1), b(2) and c(10-14). The alpha and beta chains form an alternating ring which encloses part of the gamma chain. F(1) is attached to F(0) by a central stalk formed by the gamma and epsilon chains, while a peripheral stalk is formed by the delta and b chains.

The protein resides in the cell membrane. In terms of biological role, f(1)F(0) ATP synthase produces ATP from ADP in the presence of a proton or sodium gradient. F-type ATPases consist of two structural domains, F(1) containing the extramembraneous catalytic core and F(0) containing the membrane proton channel, linked together by a central stalk and a peripheral stalk. During catalysis, ATP synthesis in the catalytic domain of F(1) is coupled via a rotary mechanism of the central stalk subunits to proton translocation. Functionally, this protein is part of the stalk that links CF(0) to CF(1). It either transmits conformational changes from CF(0) to CF(1) or is implicated in proton conduction. This is ATP synthase subunit delta from Kocuria rhizophila (strain ATCC 9341 / DSM 348 / NBRC 103217 / DC2201).